The primary structure comprises 295 residues: Proline iminopeptidase (295 aa).

The AB hydrolase-1 domain maps to 29-279 (PLLLLHGGPG…GCGHMPFVQE (251 aa)). Ser107 acts as the Nucleophile in catalysis. Asp246 is a catalytic residue. Residue His273 is the Proton donor of the active site.

The protein belongs to the peptidase S33 family.

Its subcellular location is the cell envelope. It catalyses the reaction Release of N-terminal proline from a peptide.. Its function is as follows. Releases the N-terminal proline from various substrates. This is Proline iminopeptidase from Lactobacillus delbrueckii subsp. bulgaricus (strain ATCC 11842 / DSM 20081 / BCRC 10696 / JCM 1002 / NBRC 13953 / NCIMB 11778 / NCTC 12712 / WDCM 00102 / Lb 14).